The sequence spans 1097 residues: DNA-directed RNA polymerase subunit beta (1097 aa).

A disordered region spans residues 1072 to 1097 (QDVNPRRSTPSRPTYESLGVADYDED).

It belongs to the RNA polymerase beta chain family. As to quaternary structure, in cyanobacteria the RNAP catalytic core is composed of 2 alpha, 1 beta, 1 beta', 1 gamma and 1 omega subunit. When a sigma factor is associated with the core the holoenzyme is formed, which can initiate transcription.

The enzyme catalyses RNA(n) + a ribonucleoside 5'-triphosphate = RNA(n+1) + diphosphate. DNA-dependent RNA polymerase catalyzes the transcription of DNA into RNA using the four ribonucleoside triphosphates as substrates. The chain is DNA-directed RNA polymerase subunit beta from Synechococcus sp. (strain CC9605).